Consider the following 959-residue polypeptide: Translation initiation factor IF-2 (959 aa).

Residues Met1–Thr10 show a composition bias toward basic and acidic residues. The disordered stretch occupies residues Met1–Ile374. Residues Glu27–His37 show a composition bias toward polar residues. 2 stretches are compositionally biased toward low complexity: residues Ala63 to Pro118 and Gln128 to Pro138. Composition is skewed to basic and acidic residues over residues Ser154–Lys225 and Ala232–Arg241. Over residues Gly246–Ala284 the composition is skewed to low complexity. The span at Pro318 to Arg333 shows a compositional bias: basic and acidic residues. Residues Ser457–Lys626 enclose the tr-type G domain. Positions Gly466–Thr473 are G1. Residue Gly466–Thr473 coordinates GTP. Positions Gly491–His495 are G2. The interval Asp512–Gly515 is G3. Residues Asp512 to His516 and Asn566 to Asp569 contribute to the GTP site. A G4 region spans residues Asn566 to Asp569. Residues Ser602–Lys604 form a G5 region.

This sequence belongs to the TRAFAC class translation factor GTPase superfamily. Classic translation factor GTPase family. IF-2 subfamily.

It localises to the cytoplasm. In terms of biological role, one of the essential components for the initiation of protein synthesis. Protects formylmethionyl-tRNA from spontaneous hydrolysis and promotes its binding to the 30S ribosomal subunits. Also involved in the hydrolysis of GTP during the formation of the 70S ribosomal complex. The protein is Translation initiation factor IF-2 of Brucella melitensis biotype 1 (strain ATCC 23456 / CCUG 17765 / NCTC 10094 / 16M).